The sequence spans 221 residues: Ubiquitin-conjugating enzyme E2 S (221 aa).

The region spanning glutamine 11 to methionine 157 is the UBC core domain. Cysteine 95 serves as the catalytic Glycyl thioester intermediate. The tract at residues glycine 158–leucine 221 is disordered. Over residues glycine 193 to isoleucine 206 the composition is skewed to low complexity. Over residues alanine 208–leucine 221 the composition is skewed to basic residues.

It belongs to the ubiquitin-conjugating enzyme family.

The enzyme catalyses S-ubiquitinyl-[E1 ubiquitin-activating enzyme]-L-cysteine + [E2 ubiquitin-conjugating enzyme]-L-cysteine = [E1 ubiquitin-activating enzyme]-L-cysteine + S-ubiquitinyl-[E2 ubiquitin-conjugating enzyme]-L-cysteine.. It functions in the pathway protein modification; protein ubiquitination. In terms of biological role, catalyzes the covalent attachment of ubiquitin to other proteins. Acts as an essential factor of the anaphase promoting complex/cyclosome (APC/C), a cell cycle-regulated ubiquitin ligase that controls progression through mitosis. Acts by specifically elongating 'Lys-11'-linked polyubiquitin chains initiated by the E2 enzyme ube2c/ubch10 on APC/C substrates, enhancing the degradation of APC/C substrates by the proteasome and promoting mitotic exit. The protein is Ubiquitin-conjugating enzyme E2 S (ube2s) of Danio rerio (Zebrafish).